A 339-amino-acid chain; its full sequence is Phenylalanine--tRNA ligase alpha subunit (339 aa).

Glutamate 247 is a Mg(2+) binding site.

This sequence belongs to the class-II aminoacyl-tRNA synthetase family. Phe-tRNA synthetase alpha subunit type 1 subfamily. Tetramer of two alpha and two beta subunits. Requires Mg(2+) as cofactor.

The protein localises to the cytoplasm. It carries out the reaction tRNA(Phe) + L-phenylalanine + ATP = L-phenylalanyl-tRNA(Phe) + AMP + diphosphate + H(+). This Deinococcus radiodurans (strain ATCC 13939 / DSM 20539 / JCM 16871 / CCUG 27074 / LMG 4051 / NBRC 15346 / NCIMB 9279 / VKM B-1422 / R1) protein is Phenylalanine--tRNA ligase alpha subunit (pheS).